A 926-amino-acid chain; its full sequence is LPS-assembly protein LptD (926 aa).

Residues 1 to 22 (MALKSPAFRKKFPLLVTGSLLA) form the signal peptide. A disordered region spans residues 58–99 (VDLPPRPVHDTTSVSSNGTVTSQSTSSGEQVAGTQLVTEAKG). Over residues 68–85 (TTSVSSNGTVTSQSTSSG) the composition is skewed to low complexity.

It belongs to the LptD family. Component of the lipopolysaccharide transport and assembly complex. Interacts with LptE and LptA.

The protein localises to the cell outer membrane. Together with LptE, is involved in the assembly of lipopolysaccharide (LPS) at the surface of the outer membrane. In Pseudomonas savastanoi pv. phaseolicola (strain 1448A / Race 6) (Pseudomonas syringae pv. phaseolicola (strain 1448A / Race 6)), this protein is LPS-assembly protein LptD.